An 80-amino-acid polypeptide reads, in one-letter code: Cytochrome c oxidase subunit 7B, mitochondrial (80 aa).

The N-terminal 24 residues, Met1–Gln24, are a transit peptide targeting the mitochondrion. Residues Ser25 to Asp32 lie on the Mitochondrial matrix side of the membrane. The chain crosses the membrane as a helical span at residues Phe33–Gln59. Over Val60–Gln80 the chain is Mitochondrial intermembrane.

This sequence belongs to the cytochrome c oxidase VIIb family. Component of the cytochrome c oxidase (complex IV, CIV), a multisubunit enzyme composed of 14 subunits. The complex is composed of a catalytic core of 3 subunits MT-CO1, MT-CO2 and MT-CO3, encoded in the mitochondrial DNA, and 11 supernumerary subunits COX4I, COX5A, COX5B, COX6A, COX6B, COX6C, COX7A, COX7B, COX7C, COX8 and NDUFA4, which are encoded in the nuclear genome. The complex exists as a monomer or a dimer and forms supercomplexes (SCs) in the inner mitochondrial membrane with NADH-ubiquinone oxidoreductase (complex I, CI) and ubiquinol-cytochrome c oxidoreductase (cytochrome b-c1 complex, complex III, CIII), resulting in different assemblies (supercomplex SCI(1)III(2)IV(1) and megacomplex MCI(2)III(2)IV(2)).

The protein localises to the mitochondrion inner membrane. Its pathway is energy metabolism; oxidative phosphorylation. Functionally, component of the cytochrome c oxidase, the last enzyme in the mitochondrial electron transport chain which drives oxidative phosphorylation. The respiratory chain contains 3 multisubunit complexes succinate dehydrogenase (complex II, CII), ubiquinol-cytochrome c oxidoreductase (cytochrome b-c1 complex, complex III, CIII) and cytochrome c oxidase (complex IV, CIV), that cooperate to transfer electrons derived from NADH and succinate to molecular oxygen, creating an electrochemical gradient over the inner membrane that drives transmembrane transport and the ATP synthase. Cytochrome c oxidase is the component of the respiratory chain that catalyzes the reduction of oxygen to water. Electrons originating from reduced cytochrome c in the intermembrane space (IMS) are transferred via the dinuclear copper A center (CU(A)) of subunit 2 and heme A of subunit 1 to the active site in subunit 1, a binuclear center (BNC) formed by heme A3 and copper B (CU(B)). The BNC reduces molecular oxygen to 2 water molecules using 4 electrons from cytochrome c in the IMS and 4 protons from the mitochondrial matrix. Plays a role in proper central nervous system (CNS) development in vertebrates. The polypeptide is Cytochrome c oxidase subunit 7B, mitochondrial (COX7B) (Pongo abelii (Sumatran orangutan)).